A 132-amino-acid chain; its full sequence is UPF0292 protein PYRAB04740 (132 aa).

The Toprim domain maps to 20 to 100; sequence DGAIIVEGPR…KVDTETRRSL (81 aa). Residues glutamate 26, aspartate 69, and aspartate 71 each contribute to the Mg(2+) site.

It belongs to the UPF0292 family. The cofactor is Mg(2+).

In Pyrococcus abyssi (strain GE5 / Orsay), this protein is UPF0292 protein PYRAB04740.